We begin with the raw amino-acid sequence, 401 residues long: 4-hydroxy-3-methylbut-2-enyl diphosphate reductase (401 aa).

Cysteine 66 serves as a coordination point for [4Fe-4S] cluster. Residue histidine 96 coordinates (2E)-4-hydroxy-3-methylbut-2-enyl diphosphate. Dimethylallyl diphosphate is bound at residue histidine 96. Histidine 96 contacts isopentenyl diphosphate. Cysteine 157 serves as a coordination point for [4Fe-4S] cluster. (2E)-4-hydroxy-3-methylbut-2-enyl diphosphate is bound at residue histidine 185. Residue histidine 185 coordinates dimethylallyl diphosphate. Histidine 185 lines the isopentenyl diphosphate pocket. The Proton donor role is filled by glutamate 187. Threonine 250 provides a ligand contact to (2E)-4-hydroxy-3-methylbut-2-enyl diphosphate. Position 288 (cysteine 288) interacts with [4Fe-4S] cluster. (2E)-4-hydroxy-3-methylbut-2-enyl diphosphate-binding residues include serine 317, serine 318, asparagine 319, and serine 381. Dimethylallyl diphosphate contacts are provided by serine 317, serine 318, asparagine 319, and serine 381. Isopentenyl diphosphate is bound by residues serine 317, serine 318, asparagine 319, and serine 381.

Belongs to the IspH family. The cofactor is [4Fe-4S] cluster.

The enzyme catalyses isopentenyl diphosphate + 2 oxidized [2Fe-2S]-[ferredoxin] + H2O = (2E)-4-hydroxy-3-methylbut-2-enyl diphosphate + 2 reduced [2Fe-2S]-[ferredoxin] + 2 H(+). It carries out the reaction dimethylallyl diphosphate + 2 oxidized [2Fe-2S]-[ferredoxin] + H2O = (2E)-4-hydroxy-3-methylbut-2-enyl diphosphate + 2 reduced [2Fe-2S]-[ferredoxin] + 2 H(+). It participates in isoprenoid biosynthesis; dimethylallyl diphosphate biosynthesis; dimethylallyl diphosphate from (2E)-4-hydroxy-3-methylbutenyl diphosphate: step 1/1. Its pathway is isoprenoid biosynthesis; isopentenyl diphosphate biosynthesis via DXP pathway; isopentenyl diphosphate from 1-deoxy-D-xylulose 5-phosphate: step 6/6. Functionally, catalyzes the conversion of 1-hydroxy-2-methyl-2-(E)-butenyl 4-diphosphate (HMBPP) into a mixture of isopentenyl diphosphate (IPP) and dimethylallyl diphosphate (DMAPP). Acts in the terminal step of the DOXP/MEP pathway for isoprenoid precursor biosynthesis. The sequence is that of 4-hydroxy-3-methylbut-2-enyl diphosphate reductase from Prochlorococcus marinus (strain NATL1A).